The chain runs to 299 residues: Acetylglutamate kinase (299 aa).

Residues 68–69 (GG), R90, and N195 each bind substrate.

Belongs to the acetylglutamate kinase family. ArgB subfamily.

It is found in the cytoplasm. The catalysed reaction is N-acetyl-L-glutamate + ATP = N-acetyl-L-glutamyl 5-phosphate + ADP. The protein operates within amino-acid biosynthesis; L-arginine biosynthesis; N(2)-acetyl-L-ornithine from L-glutamate: step 2/4. Its function is as follows. Catalyzes the ATP-dependent phosphorylation of N-acetyl-L-glutamate. In Erythrobacter litoralis (strain HTCC2594), this protein is Acetylglutamate kinase.